Here is a 172-residue protein sequence, read N- to C-terminus: Xanthine-guanine phosphoribosyltransferase (172 aa).

5-phospho-alpha-D-ribose 1-diphosphate is bound by residues 47–48 (RG) and 106–114 (DDLVDTGKT). Position 107 (aspartate 107) interacts with Mg(2+). Residues aspartate 110 and isoleucine 153 each contribute to the guanine site. 2 residues coordinate xanthine: aspartate 110 and isoleucine 153. Residues 110 to 114 (DTGKT) and 152 to 153 (WI) contribute to the GMP site.

It belongs to the purine/pyrimidine phosphoribosyltransferase family. XGPT subfamily. In terms of assembly, homotetramer. Mg(2+) serves as cofactor.

It localises to the cell inner membrane. The enzyme catalyses GMP + diphosphate = guanine + 5-phospho-alpha-D-ribose 1-diphosphate. It catalyses the reaction XMP + diphosphate = xanthine + 5-phospho-alpha-D-ribose 1-diphosphate. The catalysed reaction is IMP + diphosphate = hypoxanthine + 5-phospho-alpha-D-ribose 1-diphosphate. It functions in the pathway purine metabolism; GMP biosynthesis via salvage pathway; GMP from guanine: step 1/1. Its pathway is purine metabolism; XMP biosynthesis via salvage pathway; XMP from xanthine: step 1/1. Functionally, purine salvage pathway enzyme that catalyzes the transfer of the ribosyl-5-phosphate group from 5-phospho-alpha-D-ribose 1-diphosphate (PRPP) to the N9 position of the 6-oxopurines guanine and xanthine to form the corresponding ribonucleotides GMP (guanosine 5'-monophosphate) and XMP (xanthosine 5'-monophosphate), with the release of PPi. To a lesser extent, also acts on hypoxanthine. This Rhodopseudomonas palustris (strain HaA2) protein is Xanthine-guanine phosphoribosyltransferase.